Consider the following 414-residue polypeptide: Procollagen C-endopeptidase enhancer 2 (414 aa).

The signal sequence occupies residues 1 to 22 (MGGASACIPLCLLLATARMARP). 7 cysteine pairs are disulfide-bonded: Cys-32–Cys-58, Cys-85–Cys-106, Cys-153–Cys-180, Cys-207–Cys-230, Cys-296–Cys-363, Cys-300–Cys-366, and Cys-311–Cys-414. CUB domains lie at 32-143 (CGGI…YSAA) and 153-267 (CGGR…YKFR). The 119-residue stretch at 296–414 (CQQKCRRMGT…PMNALKNKQC (119 aa)) folds into the NTR domain. Asn-354 is a glycosylation site (N-linked (GlcNAc...) asparagine).

As to quaternary structure, interacts with heparin with high affinity, and type I or II collagen. In terms of processing, O-glycosylated; contains sialic acid.

The protein resides in the secreted. In terms of biological role, binds to the C-terminal propeptide of types I and II procollagens and may enhance the cleavage of that propeptide by BMP1. The polypeptide is Procollagen C-endopeptidase enhancer 2 (Pcolce2) (Mus musculus (Mouse)).